The chain runs to 223 residues: Cytidylate kinase (223 aa).

11–19 is an ATP binding site; sequence GPAGVGKST.

The protein belongs to the cytidylate kinase family. Type 1 subfamily.

The protein resides in the cytoplasm. The catalysed reaction is CMP + ATP = CDP + ADP. The enzyme catalyses dCMP + ATP = dCDP + ADP. The protein is Cytidylate kinase of Maridesulfovibrio salexigens (strain ATCC 14822 / DSM 2638 / NCIMB 8403 / VKM B-1763) (Desulfovibrio salexigens).